The sequence spans 338 residues: Ketol-acid reductoisomerase (NADP(+)) (338 aa).

The KARI N-terminal Rossmann domain maps to 1-181 (MRVFYDKDCD…GGGRTGIIET (181 aa)). NADP(+) is bound by residues 24-27 (YGSQ), Arg-47, Ser-50, Thr-52, and 82-85 (DEFQ). His-107 is a catalytic residue. Gly-133 lines the NADP(+) pocket. The KARI C-terminal knotted domain maps to 182–327 (TFKDETETDL…EKLRAMMPWI (146 aa)). The Mg(2+) site is built by Asp-190, Glu-194, Glu-226, and Glu-230. Ser-251 is a binding site for substrate.

This sequence belongs to the ketol-acid reductoisomerase family. The cofactor is Mg(2+).

The catalysed reaction is (2R)-2,3-dihydroxy-3-methylbutanoate + NADP(+) = (2S)-2-acetolactate + NADPH + H(+). It catalyses the reaction (2R,3R)-2,3-dihydroxy-3-methylpentanoate + NADP(+) = (S)-2-ethyl-2-hydroxy-3-oxobutanoate + NADPH + H(+). It participates in amino-acid biosynthesis; L-isoleucine biosynthesis; L-isoleucine from 2-oxobutanoate: step 2/4. The protein operates within amino-acid biosynthesis; L-valine biosynthesis; L-valine from pyruvate: step 2/4. Its function is as follows. Involved in the biosynthesis of branched-chain amino acids (BCAA). Catalyzes an alkyl-migration followed by a ketol-acid reduction of (S)-2-acetolactate (S2AL) to yield (R)-2,3-dihydroxy-isovalerate. In the isomerase reaction, S2AL is rearranged via a Mg-dependent methyl migration to produce 3-hydroxy-3-methyl-2-ketobutyrate (HMKB). In the reductase reaction, this 2-ketoacid undergoes a metal-dependent reduction by NADPH to yield (R)-2,3-dihydroxy-isovalerate. This Pseudomonas aeruginosa (strain LESB58) protein is Ketol-acid reductoisomerase (NADP(+)).